The sequence spans 496 residues: Glycerol kinase (496 aa).

Thr-12 provides a ligand contact to ADP. 3 residues coordinate ATP: Thr-12, Thr-13, and Ser-14. Thr-12 is a sn-glycerol 3-phosphate binding site. Arg-16 is an ADP binding site. Sn-glycerol 3-phosphate-binding residues include Arg-82, Glu-83, and Tyr-134. Glycerol contacts are provided by Arg-82, Glu-83, and Tyr-134. The residue at position 230 (His-230) is a Phosphohistidine; by HPr. Asp-244 lines the sn-glycerol 3-phosphate pocket. Residues Asp-244 and Gln-245 each contribute to the glycerol site. ADP is bound by residues Thr-266 and Gly-309. Residues Thr-266, Gly-309, Gln-313, and Gly-410 each contribute to the ATP site. ADP-binding residues include Gly-410 and Asn-414.

Belongs to the FGGY kinase family. As to quaternary structure, homotetramer and homodimer (in equilibrium). In terms of processing, the phosphoenolpyruvate-dependent sugar phosphotransferase system (PTS), including enzyme I, and histidine-containing protein (HPr) are required for the phosphorylation, which leads to the activation of the enzyme.

It catalyses the reaction glycerol + ATP = sn-glycerol 3-phosphate + ADP + H(+). The protein operates within polyol metabolism; glycerol degradation via glycerol kinase pathway; sn-glycerol 3-phosphate from glycerol: step 1/1. Its activity is regulated as follows. Activated by phosphorylation and inhibited by fructose 1,6-bisphosphate (FBP). In terms of biological role, key enzyme in the regulation of glycerol uptake and metabolism. Catalyzes the phosphorylation of glycerol to yield sn-glycerol 3-phosphate. This is Glycerol kinase from Bacillus velezensis (strain DSM 23117 / BGSC 10A6 / LMG 26770 / FZB42) (Bacillus amyloliquefaciens subsp. plantarum).